We begin with the raw amino-acid sequence, 315 residues long: Olfactory receptor 3A3 (315 aa).

Topologically, residues 1-28 (MESEAGTNRTAVAEFMLLGLVQTEEMQS) are extracellular. Asn-8 carries N-linked (GlcNAc...) asparagine glycosylation. Residues 29 to 52 (VIFVLLLFAYLVTTGGNLSILAAI) traverse the membrane as a helical segment. Over 53-60 (LVEPKLHT) the chain is Cytoplasmic. A helical membrane pass occupies residues 61 to 82 (PMYFFLGNLSVLDVGCITVTVP). Residues 83 to 103 (AMLGRLLSHKSTISYDACLSQ) are Extracellular-facing. Cys-100 and Cys-192 are disulfide-bonded. Residues 104–123 (LFFFHLLAGMDCFLLTAMAY) form a helical membrane-spanning segment. Residues 124 to 143 (DRFLAICRPLTYSTHMNQRV) lie on the Cytoplasmic side of the membrane. A helical membrane pass occupies residues 144–161 (QRMLVAVSWTCAFTNALT). The Extracellular segment spans residues 162-199 (HTIALTTLNFCGPSVINHFYCDLPQLFQLSCSSTQLNE). The chain crosses the membrane as a helical span at residues 200 to 222 (LLLFVAAAVMAVAPLVFISVSYA). At 223–239 (HVVAAVLQIHSAEGRKK) the chain is on the cytoplasmic side. A helical transmembrane segment spans residues 240–262 (AFSTCGSHLTVVGIFYGTGVFSY). The Extracellular segment spans residues 263-275 (MRLGSVESSDKDK). Residues 276-295 (GVGVFMTVINPMLNPLIYSL) traverse the membrane as a helical segment. Over 296 to 315 (RNTDVQGALCQLLVVKRSLT) the chain is Cytoplasmic.

This sequence belongs to the G-protein coupled receptor 1 family.

Its subcellular location is the cell membrane. In terms of biological role, odorant receptor. This Pan troglodytes (Chimpanzee) protein is Olfactory receptor 3A3 (OR3A3).